We begin with the raw amino-acid sequence, 64 residues long: Alpha-toxin Ts5 (64 aa).

The region spanning 2–64 (KDGYPVEGDN…KEPTKTSGRC (63 aa)) is the LCN-type CS-alpha/beta domain. Disulfide bonds link cysteine 12–cysteine 64, cysteine 16–cysteine 38, cysteine 24–cysteine 44, and cysteine 28–cysteine 46.

It belongs to the long (4 C-C) scorpion toxin superfamily. Sodium channel inhibitor family. Alpha subfamily. Expressed by the venom gland.

The protein resides in the secreted. Its function is as follows. Alpha toxins bind voltage-independently at site-3 of sodium channels (Nav) and inhibit the inactivation of the activated channels, thereby blocking neuronal transmission. By extending the depolarized period it indirectly affects beta-cell voltage-dependent potassium channels, thus increasing potassium permeability. This is Alpha-toxin Ts5 from Tityus serrulatus (Brazilian scorpion).